Consider the following 261-residue polypeptide: Bidirectional sugar transporter SWEET1b (261 aa).

Residues 1 to 6 (MEDLAK) are Extracellular-facing. Residues 7–27 (FLFGVSGNVIALFLFLSPVPT) traverse the membrane as a helical segment. The MtN3/slv 1 domain maps to 7-95 (FLFGVSGNVI…VVFLVFASTH (89 aa)). Topologically, residues 28 to 42 (FWRIIRRKSTEDFSG) are cytoplasmic. Residues 43–63 (VPYNMTLINCLLSAWYGLPFV) form a helical membrane-spanning segment. Over 64–71 (SPNNILVS) the chain is Extracellular. The chain crosses the membrane as a helical span at residues 72–92 (TINGAGAVIETAYVVVFLVFA). The Cytoplasmic portion of the chain corresponds to 93–101 (STHKTRLRT). A helical transmembrane segment spans residues 102-122 (LGLAAAVASVFAAVALVSLLA). Topologically, residues 123–129 (LHGQHRK) are extracellular. A helical transmembrane segment spans residues 130–150 (LLCGVAATVCSICMYASPLSI). One can recognise a MtN3/slv 2 domain in the interval 133–215 (GVAATVCSIC…VLYAIYRNNK (83 aa)). At 151-164 (MRLVIKTKSVEYMP) the chain is on the cytoplasmic side. The chain crosses the membrane as a helical span at residues 165–185 (FLMSLAVFLCGTSWFIYGLLG). Over 186–189 (RDPF) the chain is Extracellular. Residues 190–210 (VTIPNGCGSFLGAVQLVLYAI) traverse the membrane as a helical segment. Residues 211-261 (YRNNKGAGGGSGGKQAGDDDVEMAEGRNNKVADGGAADDDSTAGGKAGTEV) lie on the Cytoplasmic side of the membrane. Positions 218-261 (GGGSGGKQAGDDDVEMAEGRNNKVADGGAADDDSTAGGKAGTEV) are disordered.

It belongs to the SWEET sugar transporter family. As to quaternary structure, forms homodimers. As to expression, highly expressed in leaves. Expressed at very low levels in roots, stems and panicles.

It is found in the cell membrane. The enzyme catalyses D-glucose(out) = D-glucose(in). It catalyses the reaction D-galactose(in) = D-galactose(out). Its function is as follows. Mediates transport of sugars across the plasma membrane. Can transport glucose and galactose, but not fructose, mannose and sucrose. The sequence is that of Bidirectional sugar transporter SWEET1b (SWEET1B) from Oryza sativa subsp. japonica (Rice).